The chain runs to 64 residues: MPKMKSHRGACKRFKATASGKIKRERMNGSHNLEKKNRKRTRRLHQSTILDGTKEKQIKRMILG.

The protein belongs to the bacterial ribosomal protein bL35 family.

In Chlorobium limicola (strain DSM 245 / NBRC 103803 / 6330), this protein is Large ribosomal subunit protein bL35.